Reading from the N-terminus, the 337-residue chain is Eukaryotic translation initiation factor 3 subunit H (337 aa).

Positions 21-153 (VQCDGLAVMK…LKAYRLTPQA (133 aa)) constitute an MPN domain.

This sequence belongs to the eIF-3 subunit H family. Component of the eukaryotic translation initiation factor 3 (eIF-3) complex.

Its subcellular location is the cytoplasm. Its function is as follows. Component of the eukaryotic translation initiation factor 3 (eIF-3) complex, which is involved in protein synthesis of a specialized repertoire of mRNAs and, together with other initiation factors, stimulates binding of mRNA and methionyl-tRNAi to the 40S ribosome. The eIF-3 complex specifically targets and initiates translation of a subset of mRNAs involved in cell proliferation. The chain is Eukaryotic translation initiation factor 3 subunit H from Bombyx mori (Silk moth).